A 270-amino-acid polypeptide reads, in one-letter code: Formamidopyrimidine-DNA glycosylase (270 aa).

The active-site Schiff-base intermediate with DNA is the Pro2. Residue Glu3 is the Proton donor of the active site. Lys58 acts as the Proton donor; for beta-elimination activity in catalysis. Residues His91, Arg110, and Arg151 each coordinate DNA. Residues 236-270 (FVYGRGGMPCKLCGTTLREAKLGQRASVYCPRCQR) form an FPG-type zinc finger. Arg260 (proton donor; for delta-elimination activity) is an active-site residue.

Belongs to the FPG family. As to quaternary structure, monomer. Zn(2+) is required as a cofactor.

It catalyses the reaction Hydrolysis of DNA containing ring-opened 7-methylguanine residues, releasing 2,6-diamino-4-hydroxy-5-(N-methyl)formamidopyrimidine.. The enzyme catalyses 2'-deoxyribonucleotide-(2'-deoxyribose 5'-phosphate)-2'-deoxyribonucleotide-DNA = a 3'-end 2'-deoxyribonucleotide-(2,3-dehydro-2,3-deoxyribose 5'-phosphate)-DNA + a 5'-end 5'-phospho-2'-deoxyribonucleoside-DNA + H(+). Involved in base excision repair of DNA damaged by oxidation or by mutagenic agents. Acts as a DNA glycosylase that recognizes and removes damaged bases. Has a preference for oxidized purines, such as 7,8-dihydro-8-oxoguanine (8-oxoG). Has AP (apurinic/apyrimidinic) lyase activity and introduces nicks in the DNA strand. Cleaves the DNA backbone by beta-delta elimination to generate a single-strand break at the site of the removed base with both 3'- and 5'-phosphates. In Pseudomonas putida (strain W619), this protein is Formamidopyrimidine-DNA glycosylase.